The chain runs to 676 residues: DNA-directed RNA polymerase subunit beta' (676 aa).

Zn(2+) contacts are provided by C69, C71, C87, and C90. The Mg(2+) site is built by D489, D491, and D493.

This sequence belongs to the RNA polymerase beta' chain family. RpoC1 subfamily. In plastids the minimal PEP RNA polymerase catalytic core is composed of four subunits: alpha, beta, beta', and beta''. When a (nuclear-encoded) sigma factor is associated with the core the holoenzyme is formed, which can initiate transcription. Mg(2+) serves as cofactor. Requires Zn(2+) as cofactor.

The protein resides in the plastid. It is found in the chloroplast. It carries out the reaction RNA(n) + a ribonucleoside 5'-triphosphate = RNA(n+1) + diphosphate. In terms of biological role, DNA-dependent RNA polymerase catalyzes the transcription of DNA into RNA using the four ribonucleoside triphosphates as substrates. This is DNA-directed RNA polymerase subunit beta' from Lolium perenne (Perennial ryegrass).